The primary structure comprises 408 residues: GDSL esterase/lipase At1g54790 (408 aa).

An N-terminal signal peptide occupies residues 1-24 (MNITKMKLFYVILFFISSLQISNS). Ser-38 acts as the Nucleophile in catalysis. Residues Asn-273, Asn-289, and Asn-361 are each glycosylated (N-linked (GlcNAc...) asparagine). Active-site residues include Asp-370 and His-373.

Belongs to the 'GDSL' lipolytic enzyme family.

The protein resides in the secreted. This Arabidopsis thaliana (Mouse-ear cress) protein is GDSL esterase/lipase At1g54790.